Here is a 429-residue protein sequence, read N- to C-terminus: Glutamate-1-semialdehyde 2,1-aminomutase 1 (429 aa).

Lysine 268 is subject to N6-(pyridoxal phosphate)lysine.

Belongs to the class-III pyridoxal-phosphate-dependent aminotransferase family. HemL subfamily. As to quaternary structure, homodimer. Requires pyridoxal 5'-phosphate as cofactor.

The protein resides in the cytoplasm. The enzyme catalyses (S)-4-amino-5-oxopentanoate = 5-aminolevulinate. It functions in the pathway porphyrin-containing compound metabolism; protoporphyrin-IX biosynthesis; 5-aminolevulinate from L-glutamyl-tRNA(Glu): step 2/2. The sequence is that of Glutamate-1-semialdehyde 2,1-aminomutase 1 from Listeria innocua serovar 6a (strain ATCC BAA-680 / CLIP 11262).